Reading from the N-terminus, the 362-residue chain is 3-dehydroquinate synthase (362 aa).

Residues 71–76 (DGEQYK), 105–109 (GVVGD), 129–130 (TT), lysine 142, lysine 151, and 169–172 (CLKT) contribute to the NAD(+) site. The Zn(2+) site is built by glutamate 184, histidine 247, and histidine 264.

Belongs to the sugar phosphate cyclases superfamily. Dehydroquinate synthase family. The cofactor is Co(2+). Requires Zn(2+) as cofactor. NAD(+) is required as a cofactor.

It localises to the cytoplasm. The catalysed reaction is 7-phospho-2-dehydro-3-deoxy-D-arabino-heptonate = 3-dehydroquinate + phosphate. The protein operates within metabolic intermediate biosynthesis; chorismate biosynthesis; chorismate from D-erythrose 4-phosphate and phosphoenolpyruvate: step 2/7. In terms of biological role, catalyzes the conversion of 3-deoxy-D-arabino-heptulosonate 7-phosphate (DAHP) to dehydroquinate (DHQ). The chain is 3-dehydroquinate synthase from Shigella boydii serotype 18 (strain CDC 3083-94 / BS512).